Here is a 260-residue protein sequence, read N- to C-terminus: Eukaryotic translation initiation factor 3 subunit G-2 (260 aa).

Residues 180–258 enclose the RRM domain; that stretch reads CAVRISNLSE…LILSVEWSKP (79 aa).

It belongs to the eIF-3 subunit G family. As to quaternary structure, component of the eukaryotic translation initiation factor 3 (eIF-3) complex. The eIF-3 complex interacts with pix.

It is found in the cytoplasm. RNA-binding component of the eukaryotic translation initiation factor 3 (eIF-3) complex, which is involved in protein synthesis of a specialized repertoire of mRNAs and, together with other initiation factors, stimulates binding of mRNA and methionyl-tRNAi to the 40S ribosome. The eIF-3 complex specifically targets and initiates translation of a subset of mRNAs involved in cell proliferation. This subunit can bind 18S rRNA. The polypeptide is Eukaryotic translation initiation factor 3 subunit G-2 (Drosophila grimshawi (Hawaiian fruit fly)).